The sequence spans 95 residues: Phosphoribosyl-ATP pyrophosphatase (95 aa).

It belongs to the PRA-PH family.

It localises to the cytoplasm. The enzyme catalyses 1-(5-phospho-beta-D-ribosyl)-ATP + H2O = 1-(5-phospho-beta-D-ribosyl)-5'-AMP + diphosphate + H(+). Its pathway is amino-acid biosynthesis; L-histidine biosynthesis; L-histidine from 5-phospho-alpha-D-ribose 1-diphosphate: step 2/9. The chain is Phosphoribosyl-ATP pyrophosphatase from Methanosphaera stadtmanae (strain ATCC 43021 / DSM 3091 / JCM 11832 / MCB-3).